Consider the following 376-residue polypeptide: Putative clathrin assembly protein At1g25240 (376 aa).

An ENTH domain is found at 25-156; sequence KTSFRNPDLD…FFLSDQIRRR (132 aa).

The protein resides in the membrane. It is found in the clathrin-coated pit. Its subcellular location is the golgi apparatus. The protein localises to the cytoplasmic vesicle. It localises to the clathrin-coated vesicle. The sequence is that of Putative clathrin assembly protein At1g25240 from Arabidopsis thaliana (Mouse-ear cress).